Here is a 124-residue protein sequence, read N- to C-terminus: Probable dihydroneopterin aldolase (124 aa).

Residues glutamate 23, tyrosine 56, and 75 to 76 (IE) each bind substrate. Lysine 103 serves as the catalytic Proton donor/acceptor.

This sequence belongs to the DHNA family.

The enzyme catalyses 7,8-dihydroneopterin = 6-hydroxymethyl-7,8-dihydropterin + glycolaldehyde. It functions in the pathway cofactor biosynthesis; tetrahydrofolate biosynthesis; 2-amino-4-hydroxy-6-hydroxymethyl-7,8-dihydropteridine diphosphate from 7,8-dihydroneopterin triphosphate: step 3/4. Functionally, catalyzes the conversion of 7,8-dihydroneopterin to 6-hydroxymethyl-7,8-dihydropterin. The protein is Probable dihydroneopterin aldolase (folB) of Chlamydia trachomatis serovar D (strain ATCC VR-885 / DSM 19411 / UW-3/Cx).